A 678-amino-acid polypeptide reads, in one-letter code: PTS system glucose-specific EIICBA component (678 aa).

Residues 3–414 (KKLFGQLQRI…FKYKTPGRED (412 aa)) enclose the PTS EIIC type-1 domain. Helical transmembrane passes span 16–36 (LMLP…GTAM), 63–83 (AGGI…AIGL), 89–109 (VAAI…GAFL), 126–146 (VLGI…GALA), 170–190 (FVPI…AWIW), 211–231 (LAVF…LHHI), 273–293 (FMQG…LAIY), 303–323 (VVAG…ITEP), 329–349 (LFVA…SFLI), 355–375 (VHLG…GVLP), and 382–402 (LVIP…RFLI). The PTS EIIB type-1 domain occupies 425–506 (SELPFNVLKA…SLIMKGEITK (82 aa)). The active-site Phosphocysteine intermediate; for EIIB activity is the C447. The region spanning 547–651 (DQVFAQKMMG…STVTPLIITN (105 aa)) is the PTS EIIA type-1 domain. Residue H599 is the Tele-phosphohistidine intermediate; for EIIA activity of the active site.

It is found in the cell membrane. The catalysed reaction is N(pros)-phospho-L-histidyl-[protein] + D-glucose(out) = D-glucose 6-phosphate(in) + L-histidyl-[protein]. The phosphoenolpyruvate-dependent sugar phosphotransferase system (sugar PTS), a major carbohydrate active transport system, catalyzes the phosphorylation of incoming sugar substrates concomitantly with their translocation across the cell membrane. This system is involved in glucose transport. The chain is PTS system glucose-specific EIICBA component (ptsG) from Staphylococcus saprophyticus subsp. saprophyticus (strain ATCC 15305 / DSM 20229 / NCIMB 8711 / NCTC 7292 / S-41).